The following is a 458-amino-acid chain: Peptidyl-prolyl cis-trans isomerase FKBP4 (458 aa).

Position 1 is an N-acetylmethionine; in peptidyl-prolyl cis-trans isomerase FKBP4; alternate (M1). The disordered stretch occupies residues 1–24 (MTAEEMKAAENGAQSAPLPLEGVD). T2 carries the N-acetylthreonine; in peptidyl-prolyl cis-trans isomerase FKBP4, N-terminally processed; partial modification. The 89-residue stretch at 50–138 (GDRVFVHYTG…VFEVELFEFK (89 aa)) folds into the PPIase FKBP-type 1 domain. T143 is modified (phosphothreonine; by CK2). The PPIase FKBP-type 2 domain occupies 167-253 (GAMVEVALEG…RYEVRLKSFE (87 aa)). Y220 carries the post-translational modification Phosphotyrosine. An interaction with tubulin region spans residues 267–400 (LEQSNIVKER…TQLAVCQQRT (134 aa)). 3 TPR repeats span residues 270–303 (SNIVKERGTAYFKEGKYKQALLQYKKIVSWLEYE), 319–352 (LASHLNLAMCHLKLQAFSAAIESCNKALELDSNN), and 353–386 (EKGLFRRGEAHLAVNDFDLARADFQKVLQLYPSN). At K282 the chain carries N6-acetyllysine. An Omega-N-methylarginine modification is found at R373. The interval 428-458 (EVAAGDHPTDAEMKGERNNVAENQSRVETEA) is disordered. Residues 434 to 458 (HPTDAEMKGERNNVAENQSRVETEA) are compositionally biased toward basic and acidic residues. T436 is subject to Phosphothreonine. Residue K441 forms a Glycyl lysine isopeptide (Lys-Gly) (interchain with G-Cter in SUMO1) linkage. Residue S452 is modified to Phosphoserine.

As to quaternary structure, homodimer. Interacts with GLMN. Associates with HSP90AA1 and HSPA1A/HSPA1B in steroid hormone receptor complexes. Also interacts with peroxisomal phytanoyl-CoA alpha-hydroxylase (PHYH). Interacts with NR3C1 and dynein. Interacts with HSF1 in the HSP90 complex. Associates with tubulin. Interacts with MAPT/TAU. Interacts (via TPR domain) with S100A1, S100A2 and S100A6; the interaction is Ca(2+) dependent. Interaction with S100A1 and S100A2 (but not with S100A6) leads to inhibition of FKBP4-HSP90 interaction. Interacts with dynein; contributes to NR3C1 transport to the nucleus. In terms of processing, phosphorylation by CK2 results in loss of HSP90 binding activity.

It localises to the cytoplasm. The protein resides in the cytosol. The protein localises to the mitochondrion. Its subcellular location is the nucleus. It is found in the cytoskeleton. It carries out the reaction [protein]-peptidylproline (omega=180) = [protein]-peptidylproline (omega=0). Inhibited by FK506. In terms of biological role, immunophilin protein with PPIase and co-chaperone activities. Component of steroid receptors heterocomplexes through interaction with heat-shock protein 90 (HSP90). May play a role in the intracellular trafficking of heterooligomeric forms of steroid hormone receptors between cytoplasm and nuclear compartments. The isomerase activity controls neuronal growth cones via regulation of TRPC1 channel opening. Also acts as a regulator of microtubule dynamics by inhibiting MAPT/TAU ability to promote microtubule assembly. May have a protective role against oxidative stress in mitochondria. The protein is Peptidyl-prolyl cis-trans isomerase FKBP4 (Fkbp4) of Mus musculus (Mouse).